Consider the following 240-residue polypeptide: Methylthioribulose-1-phosphate dehydratase (240 aa).

C99 provides a ligand contact to substrate. The Zn(2+) site is built by H116 and H118. E145 serves as the catalytic Proton donor/acceptor. H201 lines the Zn(2+) pocket.

The protein belongs to the aldolase class II family. MtnB subfamily. Zn(2+) is required as a cofactor.

The protein resides in the cytoplasm. The catalysed reaction is 5-(methylsulfanyl)-D-ribulose 1-phosphate = 5-methylsulfanyl-2,3-dioxopentyl phosphate + H2O. It participates in amino-acid biosynthesis; L-methionine biosynthesis via salvage pathway; L-methionine from S-methyl-5-thio-alpha-D-ribose 1-phosphate: step 2/6. Its function is as follows. Catalyzes the dehydration of methylthioribulose-1-phosphate (MTRu-1-P) into 2,3-diketo-5-methylthiopentyl-1-phosphate (DK-MTP-1-P). The protein is Methylthioribulose-1-phosphate dehydratase of Ajellomyces capsulatus (strain H143) (Darling's disease fungus).